The chain runs to 76 residues: Brevinin-2ISa (76 aa).

The signal sequence occupies residues 1 to 22; that stretch reads MFNMKKSLLLLFFLGTISLSLC. Residues 23–41 constitute a propeptide, removed in mature form; sequence EEERDADEDDGVEMTEEEV. A disulfide bond links Cys70 and Cys76.

As to expression, expressed by the skin glands.

It localises to the secreted. Its function is as follows. Has antimicrobial activity against Gram-negative bacterium E.coli ATCC 8739 (MIC=50 ug), against Gram positive bacteria S.aureus ATCC 6538 (MIC=12.5 ug), methicillin-resistant S.aureus ATCC 43300 (MIC=100 ug) and B.subtilis ATCC 6633 (MIC=12.5 ug). Has no activity against fungus C.albicans ATCC 90028. The polypeptide is Brevinin-2ISa (Odorrana ishikawae (Ishikawa's frog)).